The following is a 409-amino-acid chain: NADH-quinone oxidoreductase subunit D (409 aa).

This sequence belongs to the complex I 49 kDa subunit family. As to quaternary structure, NDH-1 is composed of 14 different subunits. Subunits NuoB, C, D, E, F, and G constitute the peripheral sector of the complex.

The protein localises to the cell inner membrane. It catalyses the reaction a quinone + NADH + 5 H(+)(in) = a quinol + NAD(+) + 4 H(+)(out). In terms of biological role, NDH-1 shuttles electrons from NADH, via FMN and iron-sulfur (Fe-S) centers, to quinones in the respiratory chain. The immediate electron acceptor for the enzyme in this species is believed to be ubiquinone. Couples the redox reaction to proton translocation (for every two electrons transferred, four hydrogen ions are translocated across the cytoplasmic membrane), and thus conserves the redox energy in a proton gradient. The protein is NADH-quinone oxidoreductase subunit D of Campylobacter concisus (strain 13826).